An 873-amino-acid chain; its full sequence is Bifunctional uridylyltransferase/uridylyl-removing enzyme (873 aa).

Residues 1–332 (MPYQCPITFN…NGGQTQEAEI (332 aa)) form a uridylyltransferase region. The interval 333 to 692 (LDNDFQRRGS…ISKKATRGGT (360 aa)) is uridylyl-removing. The region spanning 451–573 (VDEHSIRLLK…VRDEESLELL (123 aa)) is the HD domain. ACT domains lie at 693 to 777 (EVFV…RTPR) and 800 to 873 (LMEL…ELAP).

It belongs to the GlnD family. Mg(2+) is required as a cofactor.

The catalysed reaction is [protein-PII]-L-tyrosine + UTP = [protein-PII]-uridylyl-L-tyrosine + diphosphate. It carries out the reaction [protein-PII]-uridylyl-L-tyrosine + H2O = [protein-PII]-L-tyrosine + UMP + H(+). Uridylyltransferase (UTase) activity is inhibited by glutamine, while glutamine activates uridylyl-removing (UR) activity. Modifies, by uridylylation and deuridylylation, the PII regulatory proteins (GlnB and homologs), in response to the nitrogen status of the cell that GlnD senses through the glutamine level. Under low glutamine levels, catalyzes the conversion of the PII proteins and UTP to PII-UMP and PPi, while under higher glutamine levels, GlnD hydrolyzes PII-UMP to PII and UMP (deuridylylation). Thus, controls uridylylation state and activity of the PII proteins, and plays an important role in the regulation of nitrogen assimilation and metabolism. The chain is Bifunctional uridylyltransferase/uridylyl-removing enzyme from Vibrio atlanticus (strain LGP32) (Vibrio splendidus (strain Mel32)).